A 260-amino-acid polypeptide reads, in one-letter code: Thiazole synthase (260 aa).

The active-site Schiff-base intermediate with DXP is the Lys-100. 1-deoxy-D-xylulose 5-phosphate contacts are provided by residues Gly-161, Ala-187–Gly-188, and Asn-209–Thr-210.

Belongs to the ThiG family. As to quaternary structure, homotetramer. Forms heterodimers with either ThiH or ThiS.

Its subcellular location is the cytoplasm. It catalyses the reaction [ThiS sulfur-carrier protein]-C-terminal-Gly-aminoethanethioate + 2-iminoacetate + 1-deoxy-D-xylulose 5-phosphate = [ThiS sulfur-carrier protein]-C-terminal Gly-Gly + 2-[(2R,5Z)-2-carboxy-4-methylthiazol-5(2H)-ylidene]ethyl phosphate + 2 H2O + H(+). It participates in cofactor biosynthesis; thiamine diphosphate biosynthesis. Functionally, catalyzes the rearrangement of 1-deoxy-D-xylulose 5-phosphate (DXP) to produce the thiazole phosphate moiety of thiamine. Sulfur is provided by the thiocarboxylate moiety of the carrier protein ThiS. In vitro, sulfur can be provided by H(2)S. This is Thiazole synthase from Sorangium cellulosum (strain So ce56) (Polyangium cellulosum (strain So ce56)).